The chain runs to 103 residues: Large ribosomal subunit protein uL24 (103 aa).

Belongs to the universal ribosomal protein uL24 family. As to quaternary structure, part of the 50S ribosomal subunit.

In terms of biological role, one of two assembly initiator proteins, it binds directly to the 5'-end of the 23S rRNA, where it nucleates assembly of the 50S subunit. Its function is as follows. One of the proteins that surrounds the polypeptide exit tunnel on the outside of the subunit. This chain is Large ribosomal subunit protein uL24, found in Bacillus mycoides (strain KBAB4) (Bacillus weihenstephanensis).